The chain runs to 357 residues: MSLTRLLIKDFRNIENADLALSPGFNFLVGANGSGKTSVLEAIYTLGHGRAFRSLQPGRVIRHEQEAFVLHGRLQGEEREMSIGLTKDKQGDSKVRIDGTDGHKIAELAHLMPMQLITPEGFTLLNGGPKYRRAFLDWGCFHNEAGFFTAWSNLKRLLKQRNAALRQVSRYEQLRPWDKELIPLAEQISTWRAEYSSAIAQDMADTCQQFLPEFSLTFSFQRGWEKETDYADVLERSFERDRMLTYTAHGPHKADFRIRADGAPVEDTLSRGQLKLLMCALRLAQGEFLTRESGRRCLYLIDDFASELDDARRGLLASRLKATQSQVFVSAISAEHVIDMSDENSKMFTVEKGKITD.

30 to 37 (GANGSGKT) contributes to the ATP binding site.

It belongs to the RecF family.

It is found in the cytoplasm. In terms of biological role, the RecF protein is involved in DNA metabolism; it is required for DNA replication and normal SOS inducibility. RecF binds preferentially to single-stranded, linear DNA. It also seems to bind ATP. This Salmonella paratyphi A (strain ATCC 9150 / SARB42) protein is DNA replication and repair protein RecF.